Reading from the N-terminus, the 483-residue chain is Cysteine proteinase 1, mitochondrial (483 aa).

Residues 1–30 constitute a mitochondrion transit peptide; the sequence is MLPTSVSRSLYLKTFRSHLLRAPQIVLKRM. Active-site residues include Cys102, His398, and Asn421. Lys483 is a propeptide (removed in mature form; by autocatalysis).

It belongs to the peptidase C1 family. In terms of assembly, homohexamer. Binds to nucleic acids. Binds single-stranded DNA and RNA with higher affinity than double-stranded DNA. In terms of processing, the N-terminus of isoform Cytoplasmic is blocked.

Its subcellular location is the mitochondrion. It is found in the cytoplasm. The catalysed reaction is Inactivates bleomycin B2 (a cytotoxic glycometallopeptide) by hydrolysis of a carboxyamide bond of beta-aminoalanine, but also shows general aminopeptidase activity. The specificity varies somewhat with source, but amino acid arylamides of Met, Leu and Ala are preferred.. With respect to regulation, inhibited by E64, a specific inhibitor of cysteine proteases, N-ethylmaleimide, iodacetamide, and mercury and zinc ions. Its function is as follows. The normal physiological role of the enzyme is unknown, but it is not essential for the viability of yeast cells. Has aminopeptidase activity, shortening substrate peptides sequentially by 1 amino acid. Has bleomycin hydrolase activity, which can protect the cell from the toxic effects of bleomycin. Has homocysteine-thiolactonase activity, protecting the cell against homocysteine toxicity. Acts as a repressor in the GAL4 regulatory system, but this does not require either the peptidase or nucleic acid-binding activities. The protein is Cysteine proteinase 1, mitochondrial (LAP3) of Saccharomyces cerevisiae (strain AWRI1631) (Baker's yeast).